The sequence spans 164 residues: Gastrin-releasing peptide (164 aa).

A signal peptide spans 1–27 (MGGGGPRRPGTLPLLALLALLAAHGGA). At M54 the chain carries Methionine amide. A propeptide spanning residues 58-164 (STGDFPYAYE…YQLCPTSALS (107 aa)) is cleaved from the precursor.

This sequence belongs to the bombesin/neuromedin-B/ranatensin family.

It is found in the secreted. The protein localises to the cytoplasmic vesicle. It localises to the secretory vesicle lumen. Its function is as follows. Stimulates the release of gastrin and other gastrointestinal hormones. Stimulates pancreatic protein and fluid secretion, and increases acid secretion from the avian proventriculus. The protein is Gastrin-releasing peptide (GRP) of Gallus gallus (Chicken).